A 64-amino-acid chain; its full sequence is Large ribosomal subunit protein bL35 (64 aa).

Residues 19–44 form a disordered region; it reads TGKLKASRPGRRHKLTGKTPKRKRQL. The segment covering 23–44 has biased composition (basic residues); sequence KASRPGRRHKLTGKTPKRKRQL.

Belongs to the bacterial ribosomal protein bL35 family.

This Protochlamydia amoebophila (strain UWE25) protein is Large ribosomal subunit protein bL35.